The chain runs to 681 residues: UvrABC system protein C (681 aa).

Residues 1–23 form a disordered region; the sequence is MNGKKLPDGGILFDETDDEDDDA. Over residues 14–23 the composition is skewed to acidic residues; that stretch reads DETDDEDDDA. Residues 67-145 form the GIY-YIG domain; it reads NSPGVYRMFN…IKRLRPRFNV (79 aa). The UVR domain occupies 255-290; the sequence is QAVKTAIARQMNEASEDLDFERAAIYRDRLAALSHV.

It belongs to the UvrC family. As to quaternary structure, interacts with UvrB in an incision complex.

It is found in the cytoplasm. Its function is as follows. The UvrABC repair system catalyzes the recognition and processing of DNA lesions. UvrC both incises the 5' and 3' sides of the lesion. The N-terminal half is responsible for the 3' incision and the C-terminal half is responsible for the 5' incision. The polypeptide is UvrABC system protein C (Agrobacterium fabrum (strain C58 / ATCC 33970) (Agrobacterium tumefaciens (strain C58))).